The chain runs to 1490 residues: MAGNSLVLPIVLWGRKAPTHCISAVLLTDDGATIVTGCHDGQICLWDLSVELQINPRALLFGHTASITCLSKACASSDKQYIVSASESGEMCLWDVSDGRCIEFTKLACTHTGIQFYQFSVGNQREGRLLCHGHYPEILVVDATSLEVLYSLVSKISPDWISSMSIIRSHRTQEDTVVALSVTGILKVWIVTSEISDMQDTEPIFEEESKPIYCQNCQSISFCAFTQRSLLVVCSKYWRVFDAGDYSLLCSGPSENGQTWTGGDFVSSDKVIIWTENGQSYIYKLPASCLPASDSFRSDVGKAVENLIPPVQHILLDRKDKELLICPPVTRFFYGCREYFHKLLIQGDSSGRLNIWNISDTADKQGSEEGLAMTTSISLQEAFDKLNPCPAGIIDQLSVIPNSNEPLKVTASVYIPAHGRLVCGREDGSIVIVPATQTAIVQLLQGEHMLRRGWPPHRTLRGHRNKVTCLLYPHQVSARYDQRYLISGGVDFSVIIWDIFSGEMKHIFCVHGGEITQLLVPPENCSARVQHCICSVASDHSVGLLSLREKKCIMLASRHLFPIQVIKWRPSDDYLVVGCSDGSVYVWQMDTGALDRCVMGITAVEILNACDEAVPAAVDSLSHPAVNLKQAMTRRSLAALKNMAHHKLQTLATNLLASEASDKGNLPKYSHNSLMVQAIKTNLTDPDIHVLFFDVEALIIQLLTEEASRPNTALISPENLQKASGSSDKGGSFLTGKRAAVLFQQVKETIKENIKEHLLDDEEEDEEIMRQRREESDPEYRSSKSKPLTLLEYNLTMDTAKLFMSCLHAWGLNEVLDEVCLDRLGMLKPHCTVSFGLLSRGGHMSLMLPGYNQPACKLSHGKTEVGRKLPASEGVGKGTYGVSRAVTTQHLLSIISLANTLMSMTNATFIGDHMKKGPTRPPRPSTPDLSKARGSPPTSSNIVQGQIKQVAAPVVSARSDADHSGSDPPSAPALHTCFLVNEGWSQLAAMHCVMLPDLLGLDKFRPPLLEMLARRWQDRCLEVREAAQALLLAELRRIEQAGRKEAIDAWAPYLPQYIDHVISPGVTSEAAQTITTAPDASGPEAKVQEEEHDLVDDDITTGCLSSVPQMKKISTSYEERRKQATAIVLLGVIGAEFGAEIEPPKLLTRPRSSSQIPEGFGLTSGGSNYSLARHTCKALTFLLLQPPSPKLPPHSTIRRTAIDLIGRGFTVWEPYMDVSAVLMGLLELCADAEKQLANITMGLPLSPAADSARSARHALSLIATARPPAFITTIAKEVHRHTALAANTQSQQNMHTTTLARAKGEILRVIEILIEKMPTDVVDLLVEVMDIIMYCLEGSLVKKKGLQECFPAICRFYMVSYYERNHRIAVGARHGSVALYDIRTGKCQTIHGHKGPITAVAFAPDGRYLATYSNTDSHISFWQMNTSLLGSIGMLNSAPQLRCIKTYQVPPVQPASPGSHNALKLARLIWTSNRNVILMAHDGKEHRFMV.

WD repeat units follow at residues 17-56 (APTHCISAVLLTDDGATIVTGCHDGQICLWDLSVELQINP), 62-104 (GHTA…CIEF), 156-199 (ISPD…SDMQ), 324-366 (LICP…DKQG), 404-443 (NEPLKVTASVYIPAHGRLVCGREDGSIVIVPATQTAIVQL), 462-507 (GHRN…MKHI), and 558-597 (RHLFPIQVIKWRPSDDYLVVGCSDGSVYVWQMDTGALDRC). Disordered regions lie at residues 761–783 (DEEEDEEIMRQRREESDPEYRSS) and 911–945 (GDHMKKGPTRPPRPSTPDLSKARGSPPTSSNIVQG). Residues 768-782 (IMRQRREESDPEYRS) are compositionally biased toward basic and acidic residues. Serine 935 carries the phosphoserine modification. A compositionally biased stretch (polar residues) spans 936–945 (PPTSSNIVQG). 2 WD repeats span residues 1351–1390 (PAICRFYMVSYYERNHRIAVGARHGSVALYDIRTGKCQTI) and 1392–1432 (GHKG…LGSI). Position 1456 is a phosphoserine (serine 1456).

The protein is WD repeat-containing protein 7 (WDR7) of Homo sapiens (Human).